The chain runs to 148 residues: Globin-3 (148 aa).

In terms of domain architecture, Globin spans Thr-2 to Ile-148. His-99 serves as a coordination point for heme.

This sequence belongs to the globin family. Monomer.

Its function is as follows. Oxygen binding protein. This is Globin-3 from Paramphistomum epiclitum.